The chain runs to 133 residues: 14 kDa fatty acid-binding protein (133 aa).

Residues Arg107 and 127–129 each bind (5Z,8Z,11Z,14Z)-eicosatetraenoate; that span reads RNY. Residues Arg107 and 127-129 contribute to the (9Z)-octadecenoate site; that span reads RNY.

This sequence belongs to the calycin superfamily. Fatty-acid binding protein (FABP) family. In terms of tissue distribution, tubercles, muscle layers and body.

It is found in the cytoplasm. In terms of biological role, may play a role in the transport of fatty acids. Binds various fatty acids, such as arachidonic, oleic, palmitic and linolenic acid (in vitro). This is 14 kDa fatty acid-binding protein from Schistosoma mansoni (Blood fluke).